Here is a 237-residue protein sequence, read N- to C-terminus: MTPQEFYQLLSQQGIELTDRQKDQFERYFELLVEWNEKINLTAITEKNEVYLKHFYDSIAPVLQGLIDNQDHKLLDIGAGAGFPSLPMKIIYPQLDVTIIDSLNKRINFLKLLAEELGLDKVHFYHGRAEDFAQDKAFRAQFDLVTARAVARMQVLSELTIPYLKVGGKLLALKASNAPEELEEAKNALNLLFSKVQDNLSYALPNGDPRFITVVEKKKETPNKYPRKAGMPNKRPL.

Residues Gly-78, Phe-83, 129 to 130 (AE), and Arg-148 each bind S-adenosyl-L-methionine. The interval 218–237 (KKETPNKYPRKAGMPNKRPL) is disordered.

Belongs to the methyltransferase superfamily. RNA methyltransferase RsmG family.

The protein resides in the cytoplasm. Functionally, specifically methylates the N7 position of a guanine in 16S rRNA. The sequence is that of Ribosomal RNA small subunit methyltransferase G from Streptococcus gordonii (strain Challis / ATCC 35105 / BCRC 15272 / CH1 / DL1 / V288).